Reading from the N-terminus, the 193-residue chain is p53 apoptosis effector related to PMP-22 (193 aa).

The next 4 membrane-spanning stretches (helical) occupy residues 12 to 32 (RWIL…ALAG), 81 to 101 (LFCG…ALCG), 110 to 130 (VIGG…VIYP), and 151 to 171 (WAYG…FFFC).

It belongs to the TMEM47 family. Expressed in the stratified squamous skin epithelium of the skin and the tongue, but not in simple epithelia (at protein level). Expressed in the oral epithelium, tongue epithelium and skin (at protein level). More abundant in areas of lower flow stress in the inner curvature compared to the outer curvature regions of the aorta (at protein level). Expressed in luminal cells and myoepithelium cells of the mammary epithelium (at protein level). Expression increases during the early stages of pregnancy before decreasing before birth, expression continues to be weak during involution which mirrors decreased desmosome abundance and organization at these time points (at protein level). Expressed by epithelial cells at the mucosal surface in the proximal colon (at protein level). Expressed in apoptotic cells.

It localises to the cell junction. The protein localises to the desmosome. Its subcellular location is the cell membrane. It is found in the cytoplasm. Functionally, component of intercellular desmosome junctions. Plays a role in stratified epithelial integrity and cell-cell adhesion by promoting desmosome assembly. Thereby plays a role in barrier function of the skin against infection. Plays a role in mammary epithelial tissue homeostasis and remodeling during and after pregnancy, potentially via its involvement in desmosome cell-cell junctions. Required for tooth enamel development via facilitating desmosome-mediated ameloblast adhesion to the stratum intermedium during the transitional stage of amelogenesis. May also play a role in downstream transcriptional regulation of other genes involved in amelogenesis such as AMBN, ENAM, MMP20 and KLK4. Plays a role as an effector in the TP53-dependent apoptotic pathway. Positively regulates apoptosis in T-helper 17 (Th17) cell populations via caspase-dependent signaling. Promotes neutrophil transepithelial migration in response to chemoattractants such as hepoxilin A3 (HXA3), N-Formylmethionyl-leucyl-phenylalanine (fMLP) and CXCL8/IL-8. May act as a positive regulator of endothelial cell apoptosis in response to blood flow-derived shear stress. The sequence is that of p53 apoptosis effector related to PMP-22 from Mus musculus (Mouse).